Consider the following 639-residue polypeptide: MSGRISDRDIAAIREGARIEDVVGDYVQLRRAGADSLKGLCPFHNEKSPSFHVRPNHGHFHCFGCGEGGDVYAFIQKIEHVSFVEAVELLADRIGHTISYTGAATSVQRDRGSRSRLLAANAAAAAFYAQALQSDEAAPARQYLTERSFDAAAARKFGCGFAPSGWDSLTKHLQRKGFEFEELEAAGLSRQGRHGPMDRFHRRLLWPIRTSAGEVVGFGARRLFDDDAMEAKYVNTPETLLYKKSSVMFGIDLAKRDIAKGHQAVVVEGYTDVMAMHLAGVTTAVASCGTAFGGEHLAMLRRLMMDDSFFRGELIYVFDGDEAGRAAALKAFDGEQKLAGQSFVAVAPDGMDPCDLRLKCGDAALRDLVARRTPLFEFAIRAAIAEMDLDSAEGRVAALRRCVPMVGQIKDPTLRDEYARQLAGWVGWADVAQVIGRVRGEAKRTKHPRLGRLGSTTIARAAQRPTAGPPTELAVRPDPRDPTLWPQREALKSALQYPALAGPVFDALTVEGFTHPEYAAVRAAIDTAGGTSAGLSGAQWLDMVRQQTTSTVTSALISELGVEAIQVDDDKLPRYIAGVLARLQEVWLGRQIAEVKSKLQRMSPIEQGDEYHALFGDLVAMEAYRRSLLEQASGDDLTA.

The segment at 41-65 (CPFHNEKSPSFHVRPNHGHFHCFGC) adopts a CHC2-type zinc-finger fold. The region spanning 262 to 348 (HQAVVVEGYT…AGQSFVAVAP (87 aa)) is the Toprim domain. Mg(2+)-binding residues include Glu-268, Asp-319, and Asp-321. The tract at residues 460 to 479 (RAAQRPTAGPPTELAVRPDP) is disordered.

This sequence belongs to the DnaG primase family. In terms of assembly, monomer. Interacts with DnaB. Zn(2+) serves as cofactor. It depends on Mg(2+) as a cofactor.

It carries out the reaction ssDNA + n NTP = ssDNA/pppN(pN)n-1 hybrid + (n-1) diphosphate.. Functionally, RNA polymerase that catalyzes the synthesis of short RNA molecules used as primers for DNA polymerase during DNA replication. The chain is DNA primase from Mycobacterium bovis (strain ATCC BAA-935 / AF2122/97).